We begin with the raw amino-acid sequence, 60 residues long: Cytochrome c oxidase subunit 9, mitochondrial (60 aa).

Topologically, residues 1–15 are mitochondrial matrix; sequence MSAIAPITGTIRKRI. The helical transmembrane segment at 16-38 threads the bilayer; sequence LADITIGFAIGGAMASYWWWGFH. Residues 39 to 57 are Mitochondrial intermembrane-facing; the sequence is KNIINKREAYYAKLAEQKA. A propeptide spans 58 to 60 (removed in mature form); sequence AEN.

It belongs to the fungal cytochrome c oxidase subunit 7a family. Component of the cytochrome c oxidase (complex IV, CIV), a multisubunit enzyme composed of a catalytic core of 3 subunits and several supernumerary subunits. The complex exists as a monomer or a dimer and forms supercomplexes (SCs) in the inner mitochondrial membrane with ubiquinol-cytochrome c oxidoreductase (cytochrome b-c1 complex, complex III, CIII).

It is found in the mitochondrion inner membrane. It participates in energy metabolism; oxidative phosphorylation. In terms of biological role, component of the cytochrome c oxidase, the last enzyme in the mitochondrial electron transport chain which drives oxidative phosphorylation. The respiratory chain contains 3 multisubunit complexes succinate dehydrogenase (complex II, CII), ubiquinol-cytochrome c oxidoreductase (cytochrome b-c1 complex, complex III, CIII) and cytochrome c oxidase (complex IV, CIV), that cooperate to transfer electrons derived from NADH and succinate to molecular oxygen, creating an electrochemical gradient over the inner membrane that drives transmembrane transport and the ATP synthase. Cytochrome c oxidase is the component of the respiratory chain that catalyzes the reduction of oxygen to water. Electrons originating from reduced cytochrome c in the intermembrane space (IMS) are transferred via the dinuclear copper A center (CU(A)) of subunit 2 and heme A of subunit 1 to the active site in subunit 1, a binuclear center (BNC) formed by heme A3 and copper B (CU(B)). The BNC reduces molecular oxygen to 2 water molecules using 4 electrons from cytochrome c in the IMS and 4 protons from the mitochondrial matrix. In Kluyveromyces lactis (strain ATCC 8585 / CBS 2359 / DSM 70799 / NBRC 1267 / NRRL Y-1140 / WM37) (Yeast), this protein is Cytochrome c oxidase subunit 9, mitochondrial (COX9).